The chain runs to 95 residues: Small ribosomal subunit protein uS19 (95 aa).

The tract at residues 73 to 95 (EFSPTRSYRGHGADKNAKGSKKK) is disordered.

This sequence belongs to the universal ribosomal protein uS19 family.

Protein S19 forms a complex with S13 that binds strongly to the 16S ribosomal RNA. This Deinococcus deserti (strain DSM 17065 / CIP 109153 / LMG 22923 / VCD115) protein is Small ribosomal subunit protein uS19.